Consider the following 950-residue polypeptide: Xylosyltransferase 1 (950 aa).

At 1–17 (MVAAPSARRLVRRSHSA) the chain is on the cytoplasmic side. Residues 18–38 (LLAALTVLLLQTLVGWNFSSL) traverse the membrane as a helical; Signal-anchor for type II membrane protein segment. Topologically, residues 39–950 (HSGAGERRGG…GAVKPDGRLR (912 aa)) are lumenal. Residues 42–246 (AGERRGGAAA…ELRYDQPPKC (205 aa)) form a disordered region. Over residues 91–104 (PPARARARALAGCP) the composition is skewed to low complexity. Residues 134 to 150 (KVRTDSNNENSVPKDFE) are compositionally biased toward basic and acidic residues. Residues 152-161 (VDNSNFAPRT) are compositionally biased toward polar residues. A compositionally biased stretch (basic and acidic residues) spans 166–193 (HQPELAKKPPSRQKELLKRRLEQEEKGK). Asparagine 215 carries an N-linked (GlcNAc...) asparagine glycan. 4 disulfides stabilise this stretch: cysteine 246/cysteine 274, cysteine 290/cysteine 531, cysteine 550/cysteine 563, and cysteine 552/cysteine 561. Residues valine 322, aspartate 350, and 379–381 (TIW) each bind UDP-alpha-D-xylose. N-linked (GlcNAc...) asparagine glycosylation occurs at asparagine 410. Residue 483-484 (DW) participates in UDP-alpha-D-xylose binding. UDP-alpha-D-xylose is bound by residues serine 564 and 587–588 (RK). Cystine bridges form between cysteine 664-cysteine 918 and cysteine 911-cysteine 924. Residue asparagine 768 is glycosylated (N-linked (GlcNAc...) asparagine). The interval 931–950 (SFSPDPKSELGAVKPDGRLR) is disordered.

The protein belongs to the glycosyltransferase 14 family. XylT subfamily. As to quaternary structure, monomer. Requires a divalent metal cation as cofactor. Post-translationally, contains 7 disulfide bonds. N-glycosylated.

Its subcellular location is the golgi apparatus membrane. The enzyme catalyses UDP-alpha-D-xylose + L-seryl-[protein] = 3-O-(beta-D-xylosyl)-L-seryl-[protein] + UDP + H(+). Its pathway is glycan metabolism; chondroitin sulfate biosynthesis. It participates in glycan metabolism; heparan sulfate biosynthesis. Functionally, catalyzes the first step in the biosynthesis of chondroitin sulfate and dermatan sulfate proteoglycans, such as DCN. Transfers D-xylose from UDP-D-xylose to specific serine residues of the core protein. Required for normal maturation of chondrocytes during bone development, normal onset of ossification and normal embryonic and postnatal skeleton development, especially of the long bones. The chain is Xylosyltransferase 1 (XYLT1) from Canis lupus familiaris (Dog).